We begin with the raw amino-acid sequence, 302 residues long: Taste receptor type 2 member 104 (302 aa).

The Extracellular portion of the chain corresponds to 1–7 (MLSALES). Residues 8 to 28 (ILLSVATSEAMLGVLGNTFIV) form a helical membrane-spanning segment. The Cytoplasmic portion of the chain corresponds to 29–43 (LVNYTDWVRNKKLSK). A helical transmembrane segment spans residues 44 to 64 (INFILTGLAISRIFTIWIITL). Residues 65-87 (DAYTKVFLLTMLMPSSLHECMSY) lie on the Extracellular side of the membrane. Residues 88-108 (IWVIINHLSVWFSTSLGIFYF) traverse the membrane as a helical segment. Residues 109–128 (LKIANFSHYIFLWMKRRADK) are Cytoplasmic-facing. Residues 129-149 (VFVFLIVFLIITWLASFPLAV) form a helical membrane-spanning segment. The Extracellular segment spans residues 150-182 (KVIKDVKIYQSNTSWLIHLEKSELLINYVFANM). The N-linked (GlcNAc...) asparagine glycan is linked to Asn161. Residues 183–203 (GPISLFIVAIIACFLLTISLW) form a helical membrane-spanning segment. Residues 204–229 (RHSRQMQSIGSGFRDLNTEAHMKAMK) lie on the Cytoplasmic side of the membrane. The helical transmembrane segment at 230–250 (VLIAFIILFILYFLGILIETL) threads the bilayer. The Extracellular portion of the chain corresponds to 251–259 (CLFLTNNKL). A helical transmembrane segment spans residues 260–280 (LFIFGFTLSAMYPCCHSFILI). Topologically, residues 281-302 (LTSRELKQATMRALQRLKCCET) are cytoplasmic.

Belongs to the G-protein coupled receptor T2R family.

The protein localises to the membrane. Functionally, putative taste receptor which may play a role in the perception of bitterness. The chain is Taste receptor type 2 member 104 from Mus musculus (Mouse).